Consider the following 82-residue polypeptide: Large ribosomal subunit protein uL23 (82 aa).

Belongs to the universal ribosomal protein uL23 family. As to quaternary structure, part of the 50S ribosomal subunit. Contacts protein L29.

In terms of biological role, binds to 23S rRNA. One of the proteins that surrounds the polypeptide exit tunnel on the outside of the ribosome. In Methanospirillum hungatei JF-1 (strain ATCC 27890 / DSM 864 / NBRC 100397 / JF-1), this protein is Large ribosomal subunit protein uL23.